Here is a 253-residue protein sequence, read N- to C-terminus: Imidazole glycerol phosphate synthase subunit HisF (253 aa).

Catalysis depends on residues Asp11 and Asp130.

It belongs to the HisA/HisF family. Heterodimer of HisH and HisF.

It localises to the cytoplasm. It carries out the reaction 5-[(5-phospho-1-deoxy-D-ribulos-1-ylimino)methylamino]-1-(5-phospho-beta-D-ribosyl)imidazole-4-carboxamide + L-glutamine = D-erythro-1-(imidazol-4-yl)glycerol 3-phosphate + 5-amino-1-(5-phospho-beta-D-ribosyl)imidazole-4-carboxamide + L-glutamate + H(+). It functions in the pathway amino-acid biosynthesis; L-histidine biosynthesis; L-histidine from 5-phospho-alpha-D-ribose 1-diphosphate: step 5/9. IGPS catalyzes the conversion of PRFAR and glutamine to IGP, AICAR and glutamate. The HisF subunit catalyzes the cyclization activity that produces IGP and AICAR from PRFAR using the ammonia provided by the HisH subunit. In Methylibium petroleiphilum (strain ATCC BAA-1232 / LMG 22953 / PM1), this protein is Imidazole glycerol phosphate synthase subunit HisF.